The chain runs to 354 residues: Ferrochelatase (354 aa).

2 residues coordinate Fe cation: H214 and E295.

The protein belongs to the ferrochelatase family.

It localises to the cytoplasm. The catalysed reaction is heme b + 2 H(+) = protoporphyrin IX + Fe(2+). The protein operates within porphyrin-containing compound metabolism; protoheme biosynthesis; protoheme from protoporphyrin-IX: step 1/1. In terms of biological role, catalyzes the ferrous insertion into protoporphyrin IX. This chain is Ferrochelatase, found in Burkholderia vietnamiensis (strain G4 / LMG 22486) (Burkholderia cepacia (strain R1808)).